A 359-amino-acid chain; its full sequence is tRNA N6-adenosine threonylcarbamoyltransferase (359 aa).

Residues histidine 115 and histidine 119 each contribute to the Fe cation site. Residues 137–141 (LVSGG), aspartate 170, glycine 183, and asparagine 283 contribute to the substrate site. A Fe cation-binding site is contributed by aspartate 311. A disordered region spans residues 328-359 (APDSLDIAPRSRWPLDEKSAPVFGTGRRGAKA).

Belongs to the KAE1 / TsaD family. It depends on Fe(2+) as a cofactor.

It localises to the cytoplasm. The enzyme catalyses L-threonylcarbamoyladenylate + adenosine(37) in tRNA = N(6)-L-threonylcarbamoyladenosine(37) in tRNA + AMP + H(+). Functionally, required for the formation of a threonylcarbamoyl group on adenosine at position 37 (t(6)A37) in tRNAs that read codons beginning with adenine. Is involved in the transfer of the threonylcarbamoyl moiety of threonylcarbamoyl-AMP (TC-AMP) to the N6 group of A37, together with TsaE and TsaB. TsaD likely plays a direct catalytic role in this reaction. This chain is tRNA N6-adenosine threonylcarbamoyltransferase, found in Brucella suis (strain ATCC 23445 / NCTC 10510).